A 461-amino-acid polypeptide reads, in one-letter code: Elongation factor 1-alpha, oocyte form (461 aa).

Position 2 is a n,N,N-trimethylglycine (Gly2). The 238-residue stretch at 5–242 (KIHINIVVIG…DCIIPPQRPT (238 aa)) folds into the tr-type G domain. A G1 region spans residues 14–21 (GHVDSGKS). 14 to 21 (GHVDSGKS) is a binding site for GTP. Residues 70 to 74 (GITID) are G2. Residues 91-94 (DAPG) form a G3 region. GTP is bound by residues 91-95 (DAPGH) and 153-156 (NKMD). The tract at residues 153–156 (NKMD) is G4. The G5 stretch occupies residues 194–196 (SGW). 5-glutamyl glycerylphosphorylethanolamine is present on residues Glu301 and Glu374.

The protein belongs to the TRAFAC class translation factor GTPase superfamily. Classic translation factor GTPase family. EF-Tu/EF-1A subfamily. As to expression, oocyte.

It is found in the cytoplasm. In terms of biological role, this protein promotes the GTP-dependent binding of aminoacyl-tRNA to the A-site of ribosomes during protein biosynthesis. This Xenopus laevis (African clawed frog) protein is Elongation factor 1-alpha, oocyte form (eef1ao).